The primary structure comprises 341 residues: Mediator of RNA polymerase II transcription subunit 18 (341 aa).

The tract at residues 139 to 216 (KVMDKEKVQS…KEHSEGNASQ (78 aa)) is disordered. The span at 163–211 (EDKKENIKKEESGEEVKGSGEEVKGSGEEVKGSGEEAKKSGEEAKEHSE) shows a compositional bias: basic and acidic residues.

The protein belongs to the Mediator complex subunit 18 family. Component of the Mediator complex.

Its subcellular location is the nucleus. In terms of biological role, component of the Mediator complex, a coactivator involved in the regulated transcription of nearly all RNA polymerase II-dependent genes. Mediator functions as a bridge to convey information from gene-specific regulatory proteins to the basal RNA polymerase II transcription machinery. Mediator is recruited to promoters by direct interactions with regulatory proteins and serves as a scaffold for the assembly of a functional preinitiation complex with RNA polymerase II and the general transcription factors. The polypeptide is Mediator of RNA polymerase II transcription subunit 18 (SRB5) (Debaryomyces hansenii (strain ATCC 36239 / CBS 767 / BCRC 21394 / JCM 1990 / NBRC 0083 / IGC 2968) (Yeast)).